We begin with the raw amino-acid sequence, 118 residues long: Large ribosomal subunit protein bL17 (118 aa).

Belongs to the bacterial ribosomal protein bL17 family. As to quaternary structure, part of the 50S ribosomal subunit. Contacts protein L32.

The sequence is that of Large ribosomal subunit protein bL17 from Gemmatimonas aurantiaca (strain DSM 14586 / JCM 11422 / NBRC 100505 / T-27).